We begin with the raw amino-acid sequence, 277 residues long: Large ribosomal subunit protein uL2 (277 aa).

Residues 222-277 (GVAMNPVDHPHGGGEGRTSGGRHPVTPWGKPTKGKKTRSNKATDKFIMRSRHQRKK) are disordered.

Belongs to the universal ribosomal protein uL2 family. As to quaternary structure, part of the 50S ribosomal subunit. Forms a bridge to the 30S subunit in the 70S ribosome.

Its function is as follows. One of the primary rRNA binding proteins. Required for association of the 30S and 50S subunits to form the 70S ribosome, for tRNA binding and peptide bond formation. It has been suggested to have peptidyltransferase activity; this is somewhat controversial. Makes several contacts with the 16S rRNA in the 70S ribosome. The polypeptide is Large ribosomal subunit protein uL2 (Brucella canis (strain ATCC 23365 / NCTC 10854 / RM-666)).